The primary structure comprises 881 residues: DNA mismatch repair protein MutS (881 aa).

Residue 632-639 (GPNMGGKS) participates in ATP binding.

Belongs to the DNA mismatch repair MutS family.

Functionally, this protein is involved in the repair of mismatches in DNA. It is possible that it carries out the mismatch recognition step. This protein has a weak ATPase activity. This chain is DNA mismatch repair protein MutS, found in Chelativorans sp. (strain BNC1).